A 32-amino-acid chain; its full sequence is Turripeptide XIV-18 (32 aa).

Position 30 is an isoleucine amide (I30).

Post-translationally, contains 2 disulfide bonds. Expressed by the venom duct.

The protein resides in the secreted. The sequence is that of Turripeptide XIV-18 from Gemmula speciosa (Splendid gem-turris).